A 104-amino-acid chain; its full sequence is Large ribosomal subunit protein uL24 (104 aa).

The protein belongs to the universal ribosomal protein uL24 family. As to quaternary structure, part of the 50S ribosomal subunit.

One of two assembly initiator proteins, it binds directly to the 5'-end of the 23S rRNA, where it nucleates assembly of the 50S subunit. Functionally, one of the proteins that surrounds the polypeptide exit tunnel on the outside of the subunit. The sequence is that of Large ribosomal subunit protein uL24 from Clostridium perfringens (strain SM101 / Type A).